We begin with the raw amino-acid sequence, 503 residues long: Na(+)-translocating NADH-quinone reductase subunit B (503 aa).

Helical transmembrane passes span 55–75 (MMLV…NSGI), 120–140 (IFLP…VLFA), 161–181 (TLPP…GVVV), and 186–206 (FGGT…FLFF). FMN phosphoryl threonine is present on threonine 248. 5 helical membrane passes run 361–381 (TSTF…IASW), 387–407 (FGIG…LIAG), 417–437 (FFIP…LVFM), 452–472 (WIYG…NPAY), and 475–495 (GVML…YFAV).

It belongs to the NqrB/RnfD family. As to quaternary structure, composed of six subunits; NqrA, NqrB, NqrC, NqrD, NqrE and NqrF. FMN serves as cofactor.

Its subcellular location is the cell inner membrane. The enzyme catalyses a ubiquinone + n Na(+)(in) + NADH + H(+) = a ubiquinol + n Na(+)(out) + NAD(+). Functionally, NQR complex catalyzes the reduction of ubiquinone-1 to ubiquinol by two successive reactions, coupled with the transport of Na(+) ions from the cytoplasm to the periplasm. NqrA to NqrE are probably involved in the second step, the conversion of ubisemiquinone to ubiquinol. In Chlamydia abortus (strain DSM 27085 / S26/3) (Chlamydophila abortus), this protein is Na(+)-translocating NADH-quinone reductase subunit B.